The sequence spans 155 residues: RNA pyrophosphohydrolase (155 aa).

Residues 6–148 (GYRANVAIVL…KQEVYRKALT (143 aa)) enclose the Nudix hydrolase domain. A Nudix box motif is present at residues 38–59 (GGVATGETPLQAMYRELHEEIG).

It belongs to the Nudix hydrolase family. RppH subfamily. A divalent metal cation is required as a cofactor.

Accelerates the degradation of transcripts by removing pyrophosphate from the 5'-end of triphosphorylated RNA, leading to a more labile monophosphorylated state that can stimulate subsequent ribonuclease cleavage. The polypeptide is RNA pyrophosphohydrolase (Francisella tularensis subsp. tularensis (strain FSC 198)).